The primary structure comprises 149 residues: uncharacterized protein (149 aa).

This is an uncharacterized protein from Mycoplasma pneumoniae (strain ATCC 29342 / M129 / Subtype 1) (Mycoplasmoides pneumoniae).